Consider the following 253-residue polypeptide: Coenzyme F420:L-glutamate ligase (253 aa).

Residues 9–12 (LPEI), 38–39 (ST), and K43 contribute to the GTP site. An a divalent metal cation-binding site is contributed by D113. N116 provides a ligand contact to GTP. A divalent metal cation-binding residues include D148, T149, and E206. 204 to 211 (AGEGDDGT) contributes to the GTP binding site.

The protein belongs to the CofE family. Homodimer. Mg(2+) serves as cofactor. The cofactor is Mn(2+). K(+) is required as a cofactor.

The catalysed reaction is oxidized coenzyme F420-0 + GTP + L-glutamate = oxidized coenzyme F420-1 + GDP + phosphate + H(+). It catalyses the reaction oxidized coenzyme F420-1 + GTP + L-glutamate = oxidized coenzyme F420-2 + GDP + phosphate + H(+). It functions in the pathway cofactor biosynthesis; coenzyme F420 biosynthesis. Functionally, catalyzes the GTP-dependent successive addition of two or more gamma-linked L-glutamates to the L-lactyl phosphodiester of 7,8-didemethyl-8-hydroxy-5-deazariboflavin (F420-0) to form coenzyme F420-0-glutamyl-glutamate (F420-2) or polyglutamated F420 derivatives. The sequence is that of Coenzyme F420:L-glutamate ligase from Natronomonas pharaonis (strain ATCC 35678 / DSM 2160 / CIP 103997 / JCM 8858 / NBRC 14720 / NCIMB 2260 / Gabara) (Halobacterium pharaonis).